Reading from the N-terminus, the 222-residue chain is N-(5'-phosphoribosyl)anthranilate isomerase (222 aa).

The protein belongs to the TrpF family.

The enzyme catalyses N-(5-phospho-beta-D-ribosyl)anthranilate = 1-(2-carboxyphenylamino)-1-deoxy-D-ribulose 5-phosphate. It functions in the pathway amino-acid biosynthesis; L-tryptophan biosynthesis; L-tryptophan from chorismate: step 3/5. This chain is N-(5'-phosphoribosyl)anthranilate isomerase, found in Xanthomonas campestris pv. campestris (strain 8004).